We begin with the raw amino-acid sequence, 396 residues long: Putative nickel insertion protein (396 aa).

The protein belongs to the LarC family.

The protein is Putative nickel insertion protein of Wolinella succinogenes (strain ATCC 29543 / DSM 1740 / CCUG 13145 / JCM 31913 / LMG 7466 / NCTC 11488 / FDC 602W) (Vibrio succinogenes).